The sequence spans 181 residues: UPF0302 protein LMOf2365_1950 (181 aa).

Belongs to the UPF0302 family.

The protein is UPF0302 protein LMOf2365_1950 of Listeria monocytogenes serotype 4b (strain F2365).